The following is a 275-amino-acid chain: Undecaprenyl-diphosphatase (275 aa).

Helical transmembrane passes span 1-21 (MTTFKAILLGIVQGLTEFLPV), 41-61 (ILFLTILLHVGTLFSVFFVYA), 95-115 (LLIIVATIPTGIIGLFFKDLF), 118-138 (FYNSTLIIGISLLVTGTLLWT), 192-212 (ATKFSFLISIPAILGATVFEV), 223-243 (FTLTMLIAGVLASFLSGVFAI), and 255-275 (LYYFSYYTWTVGSIVILFSLL).

It belongs to the UppP family.

It is found in the cell membrane. The catalysed reaction is di-trans,octa-cis-undecaprenyl diphosphate + H2O = di-trans,octa-cis-undecaprenyl phosphate + phosphate + H(+). In terms of biological role, catalyzes the dephosphorylation of undecaprenyl diphosphate (UPP). Confers resistance to bacitracin. The chain is Undecaprenyl-diphosphatase from Alkaliphilus metalliredigens (strain QYMF).